Reading from the N-terminus, the 25-residue chain is KYYGNGVTCGKHSXSVDWSKATTNI.

A disulfide bond links C9 and X14.

The protein localises to the secreted. In terms of biological role, bactericidal activity against a wide range of pathogenic bacteria, including Bacillus spp., Enterococcus spp., Listeria spp., Staphylococcus spp. and Streptococcus spp. Has no activity against Lactobacillus salivarius, Staphylococcus aureus, Streptococcus pyogenes and Streptococcus suis. This chain is Bacteriocin mutacin F-59.1, found in Streptococcus mutans.